Here is a 345-residue protein sequence, read N- to C-terminus: uncharacterized protein (345 aa).

Disordered regions lie at residues 1–58 (MPSP…WRGD) and 139–165 (KTNSTFYKDNGDSSEKQGSAESKNSPK). Basic and acidic residues predominate over residues 27 to 39 (IKGEGSDDGKEKS). A compositionally biased stretch (polar residues) spans 154–165 (KQGSAESKNSPK).

This sequence belongs to the MG307/MG309/MG338 family.

This is an uncharacterized protein from Mycoplasma pneumoniae (strain ATCC 29342 / M129 / Subtype 1) (Mycoplasmoides pneumoniae).